The chain runs to 295 residues: Acetyl-coenzyme A carboxylase carboxyl transferase subunit beta (295 aa).

Positions 1-20 (MSWLSKLMPSGIRTENTPAK) are disordered. The CoA carboxyltransferase N-terminal domain occupies 28–295 (LWEKCSNCGS…QPHPQDADAA (268 aa)). Residues C32, C35, C51, and C54 each contribute to the Zn(2+) site. The segment at 32 to 54 (CSNCGSALYGPELEENLEVCPKC) adopts a C4-type zinc-finger fold.

Belongs to the AccD/PCCB family. In terms of assembly, acetyl-CoA carboxylase is a heterohexamer composed of biotin carboxyl carrier protein (AccB), biotin carboxylase (AccC) and two subunits each of ACCase subunit alpha (AccA) and ACCase subunit beta (AccD). Requires Zn(2+) as cofactor.

Its subcellular location is the cytoplasm. The enzyme catalyses N(6)-carboxybiotinyl-L-lysyl-[protein] + acetyl-CoA = N(6)-biotinyl-L-lysyl-[protein] + malonyl-CoA. It participates in lipid metabolism; malonyl-CoA biosynthesis; malonyl-CoA from acetyl-CoA: step 1/1. In terms of biological role, component of the acetyl coenzyme A carboxylase (ACC) complex. Biotin carboxylase (BC) catalyzes the carboxylation of biotin on its carrier protein (BCCP) and then the CO(2) group is transferred by the transcarboxylase to acetyl-CoA to form malonyl-CoA. The polypeptide is Acetyl-coenzyme A carboxylase carboxyl transferase subunit beta (Xanthomonas campestris pv. campestris (strain 8004)).